The primary structure comprises 425 residues: Trigger factor (425 aa).

The 74-residue stretch at Gly-158–Pro-231 folds into the PPIase FKBP-type domain.

It belongs to the FKBP-type PPIase family. Tig subfamily.

Its subcellular location is the cytoplasm. The enzyme catalyses [protein]-peptidylproline (omega=180) = [protein]-peptidylproline (omega=0). Its function is as follows. Involved in protein export. Acts as a chaperone by maintaining the newly synthesized protein in an open conformation. Functions as a peptidyl-prolyl cis-trans isomerase. This Thermotoga petrophila (strain ATCC BAA-488 / DSM 13995 / JCM 10881 / RKU-1) protein is Trigger factor.